Here is a 152-residue protein sequence, read N- to C-terminus: Small ribosomal subunit protein uS19z (152 aa).

It belongs to the universal ribosomal protein uS19 family.

The protein localises to the cytoplasm. This is Small ribosomal subunit protein uS19z (RPS15B) from Arabidopsis thaliana (Mouse-ear cress).